Reading from the N-terminus, the 327-residue chain is Glycerol-3-phosphate dehydrogenase [NAD(P)+] (327 aa).

Residues W13, H33, and K102 each contribute to the NADPH site. Positions 102, 130, and 132 each coordinate sn-glycerol 3-phosphate. NADPH is bound at residue A134. Residues K185, D238, S248, R249, and N250 each contribute to the sn-glycerol 3-phosphate site. The Proton acceptor role is filled by K185. R249 is a binding site for NADPH. Residue E275 participates in NADPH binding.

This sequence belongs to the NAD-dependent glycerol-3-phosphate dehydrogenase family.

The protein localises to the cytoplasm. It carries out the reaction sn-glycerol 3-phosphate + NAD(+) = dihydroxyacetone phosphate + NADH + H(+). The catalysed reaction is sn-glycerol 3-phosphate + NADP(+) = dihydroxyacetone phosphate + NADPH + H(+). Its pathway is membrane lipid metabolism; glycerophospholipid metabolism. Functionally, catalyzes the reduction of the glycolytic intermediate dihydroxyacetone phosphate (DHAP) to sn-glycerol 3-phosphate (G3P), the key precursor for phospholipid synthesis. This chain is Glycerol-3-phosphate dehydrogenase [NAD(P)+], found in Vesicomyosocius okutanii subsp. Calyptogena okutanii (strain HA).